The following is a 280-amino-acid chain: MAKIIDGKAIAAKIRGEITAEVAKLAAQGITPGLAVVLVGEDPASKVYVSMKEKACKDVGIFSDEYKLPAETTEEELLQLIDKLNKDRKIHGILVQLPLPKQINTEKVLEAISPEKDADGFHPYNVGRLVIGKPLFQPCTPYGVMVMLKETGVDLAGKEVVVVGRSNIVGKPVAFMCLQQNATVTLCHSKTRDLAAKVAMADVVIAAVGQPEMIKGAWIKKGAVVIDVGVNRVGEKKLVGDVEYEAASARASAITPVPGGVGPMTITMLLYNTLESAKRR.

Residues 164-166 (GRS), serine 189, and valine 230 contribute to the NADP(+) site.

The protein belongs to the tetrahydrofolate dehydrogenase/cyclohydrolase family. As to quaternary structure, homodimer.

It catalyses the reaction (6R)-5,10-methylene-5,6,7,8-tetrahydrofolate + NADP(+) = (6R)-5,10-methenyltetrahydrofolate + NADPH. It carries out the reaction (6R)-5,10-methenyltetrahydrofolate + H2O = (6R)-10-formyltetrahydrofolate + H(+). The protein operates within one-carbon metabolism; tetrahydrofolate interconversion. Catalyzes the oxidation of 5,10-methylenetetrahydrofolate to 5,10-methenyltetrahydrofolate and then the hydrolysis of 5,10-methenyltetrahydrofolate to 10-formyltetrahydrofolate. This chain is Bifunctional protein FolD, found in Geotalea daltonii (strain DSM 22248 / JCM 15807 / FRC-32) (Geobacter daltonii).